Reading from the N-terminus, the 232-residue chain is Vesicle transport through interaction with t-SNAREs homolog 1B (232 aa).

The residue at position 2 (A2) is an N-acetylalanine. Interaction with CLINT1 stretches follow at residues 2–23 and 69–73; these read ATSA…GLLE and APLTF. At 2–208 the chain is on the cytoplasmic side; the sequence is ATSAASSEHF…SRKVITNKLL (207 aa). Residues 36-98 adopt a coiled-coil conformation; the sequence is AGTEEKKKLV…AKLHREVRST (63 aa). T103 is subject to Phosphothreonine. R107 carries the omega-N-methylarginine modification. S138 carries the phosphoserine modification. A coiled-coil region spans residues 160-201; sequence GSEIIEELGEQRDQLERTKSRLVNTNENLSKSRKILRSMSRK. The chain crosses the membrane as a helical; Anchor for type IV membrane protein span at residues 209 to 229; it reads LSVIIVLELAILVGLVYYKFF. At 230 to 232 the chain is on the vesicular side; sequence RHH.

Belongs to the VTI1 family. Forms a SNARE complex with STX7, STX8 and VAMP8 which functions in the homotypic fusion of late endosomes. Component of the SNARE complex composed of STX7, STX8, VAMP7 and VIT1B that is required for heterotypic fusion of late endosomes with lysosomes. May interact with STX17. Interacts with CLINT1.

The protein resides in the early endosome membrane. It is found in the late endosome membrane. The protein localises to the lysosome membrane. Its subcellular location is the cytoplasmic granule. It localises to the recycling endosome membrane. In terms of biological role, V-SNARE that mediates vesicle transport pathways through interactions with t-SNAREs on the target membrane. These interactions are proposed to mediate aspects of the specificity of vesicle trafficking and to promote fusion of the lipid bilayers. The chain is Vesicle transport through interaction with t-SNAREs homolog 1B (Vti1b) from Rattus norvegicus (Rat).